Reading from the N-terminus, the 202-residue chain is Translation initiation factor IF-3 (202 aa).

A disordered region spans residues 178–202 (TPRKTPLLKKESETTEPKKALRSIN). Residues 185–196 (LKKESETTEPKK) are compositionally biased toward basic and acidic residues.

The protein belongs to the IF-3 family. As to quaternary structure, monomer.

It localises to the cytoplasm. Functionally, IF-3 binds to the 30S ribosomal subunit and shifts the equilibrium between 70S ribosomes and their 50S and 30S subunits in favor of the free subunits, thus enhancing the availability of 30S subunits on which protein synthesis initiation begins. The chain is Translation initiation factor IF-3 from Prochlorococcus marinus (strain NATL1A).